The primary structure comprises 318 residues: ATP synthase gamma chain (318 aa).

It belongs to the ATPase gamma chain family. As to quaternary structure, F-type ATPases have 2 components, CF(1) - the catalytic core - and CF(0) - the membrane proton channel. CF(1) has five subunits: alpha(3), beta(3), gamma(1), delta(1), epsilon(1). CF(0) has three main subunits: a, b and c.

The protein resides in the cell membrane. Its function is as follows. Produces ATP from ADP in the presence of a proton gradient across the membrane. The gamma chain is believed to be important in regulating ATPase activity and the flow of protons through the CF(0) complex. The polypeptide is ATP synthase gamma chain (Lactobacillus johnsonii (strain CNCM I-12250 / La1 / NCC 533)).